The following is a 68-amino-acid chain: Conotoxin PnMLKM-011 (68 aa).

The signal sequence occupies residues 1 to 17; that stretch reads MGVVLFIFLVLFPLATL. Residues 18 to 51 constitute a propeptide that is removed on maturation; it reads QLDPDQPVERYAENKQLLNPDERRGIILHALGQR. Intrachain disulfides connect Cys-53–Cys-65, Cys-54–Cys-63, and Cys-59–Cys-66. Leu-67 carries the post-translational modification Leucine amide.

Belongs to the conotoxin M superfamily. As to expression, expressed by the venom duct.

The protein localises to the secreted. This Conus pennaceus (Feathered cone) protein is Conotoxin PnMLKM-011.